The primary structure comprises 175 residues: Cytochrome c homolog (175 aa).

Over 1 to 8 (MTGKELNK) the chain is Cytoplasmic. Residues 9 to 29 (IVAAILFASLIAMIVRFVANI) traverse the membrane as a helical; Signal-anchor segment. Over 30–175 (LYKPNLQVLN…LFLKNYVHDK (146 aa)) the chain is Periplasmic. Cysteine 84, cysteine 87, histidine 88, and methionine 150 together coordinate heme c.

Belongs to the cytochrome c family. Post-translationally, binds 1 heme c group covalently per subunit.

The protein localises to the cell membrane. Functionally, may be involved in electron transfer from bc1 complex to aa3. This chain is Cytochrome c homolog (cycM), found in Rickettsia typhi (strain ATCC VR-144 / Wilmington).